We begin with the raw amino-acid sequence, 339 residues long: DNA-directed RNA polymerase subunit alpha (339 aa).

The tract at residues 1–235 (MTIQKNWQEL…DQLNVFVNFE (235 aa)) is alpha N-terminal domain (alpha-NTD). An alpha C-terminal domain (alpha-CTD) region spans residues 251–339 (FNPAFLKKVD…ELAKRFEDHY (89 aa)).

It belongs to the RNA polymerase alpha chain family. In terms of assembly, homodimer. The RNAP catalytic core consists of 2 alpha, 1 beta, 1 beta' and 1 omega subunit. When a sigma factor is associated with the core the holoenzyme is formed, which can initiate transcription.

It carries out the reaction RNA(n) + a ribonucleoside 5'-triphosphate = RNA(n+1) + diphosphate. DNA-dependent RNA polymerase catalyzes the transcription of DNA into RNA using the four ribonucleoside triphosphates as substrates. The chain is DNA-directed RNA polymerase subunit alpha from Rhodopseudomonas palustris (strain BisB5).